The chain runs to 427 residues: 12-alpha,13-alpha-dihydroxyfumitremorgin C prenyltransferase (427 aa).

Residue glutamate 94 participates in substrate binding. The dimethylallyl diphosphate site is built by arginine 105, lysine 192, tyrosine 194, tyrosine 268, glutamine 353, tyrosine 355, tyrosine 419, and tyrosine 423.

It belongs to the tryptophan dimethylallyltransferase family.

It carries out the reaction 12alpha,13alpha-dihydroxyfumitremorgin C + dimethylallyl diphosphate = fumitremorgin B + diphosphate. Its pathway is mycotoxin biosynthesis. Its function is as follows. 12-alpha,13-alpha-dihydroxyfumitremorgin C prenyltransferase; part of the gene cluster that mediates the biosynthesis of fumitremorgins, indole alkaloids that carry not only intriguing chemical structures, but also interesting biological and pharmacological activities. The biosynthesis of fumitremorgin-type alkaloids begins by condensation of the two amino acids L-tryptophan and L-proline to brevianamide F, catalyzed by the non-ribosomal peptide synthetase ftmA. Brevianamide F is then prenylated by the prenyltransferase ftmPT1/ftmB in the presence of dimethylallyl diphosphate, resulting in the formation of tryprostatin B. The three cytochrome P450 monooxygenases, ftmP450-1/ftmC, ftmP450-2/ftmE and ftmP450-3/FtmG, are responsible for the conversion of tryprostatin B to 6-hydroxytryprostatin B, tryprostatin A to fumitremorgin C and fumitremorgin C to 12,13-dihydroxyfumitremorgin C, respectively. The putative methyltransferase ftmMT/ftmD is expected for the conversion of 6-hydroxytryprostatin B to tryprostatin A. FtmPT2/FtmH catalyzes the prenylation of 12,13-dihydroxyfumitre-morgin C in the presence of dimethylallyl diphosphate, resulting in the formation of fumitremorgin B. Fumitremorgin B is further converted to verruculogen by ftmOx1/ftmF via the insertion of an endoperoxide bond between the two prenyl moieties. In some fungal species, verruculogen is further converted to fumitremorgin A, but the enzymes involved in this step have not been identified yet. This is 12-alpha,13-alpha-dihydroxyfumitremorgin C prenyltransferase from Aspergillus fumigatus (strain ATCC MYA-4609 / CBS 101355 / FGSC A1100 / Af293) (Neosartorya fumigata).